Here is a 106-residue protein sequence, read N- to C-terminus: Neisseria hypothetical transcription factor (106 aa).

An HTH cro/C1-type domain is found at 26–80 (MRLFRVNKGWSQEELARQCGLDRTYVSAVERKRWNIALSNIEKMAAALGVAAYQL). The H-T-H motif DNA-binding region spans 37-56 (QEELARQCGLDRTYVSAVER).

As to quaternary structure, homodimer. Can interact with the dimeric form of the DNA mimic protein DMP19 with 1:1 stoichiometry.

The protein resides in the cytoplasm. Repressor activity is inhibited in the presence of the DNA mimic protein DMP19, which interacts with NHTF and prevents binding of NHTF to its DNA-binding sites. In terms of biological role, transcriptional regulator probably involved in the response to nitrogen levels. Down-regulates its own expression as well as the expression of the downstream gene, glnD, which encodes the [Protein-PII] uridylyltransferase, a key enzyme in the nitrogen regulation system. Acts by binding to a specific palindromic DNA sequence (5'-TGTNANTNACA-3') in its 5'-untranslated region. The sequence is that of Neisseria hypothetical transcription factor from Neisseria meningitidis serogroup B (strain ATCC BAA-335 / MC58).